The following is a 156-amino-acid chain: Small ribosomal subunit protein uS7 (156 aa).

It belongs to the universal ribosomal protein uS7 family. Part of the 30S ribosomal subunit. Contacts proteins S9 and S11.

One of the primary rRNA binding proteins, it binds directly to 16S rRNA where it nucleates assembly of the head domain of the 30S subunit. Is located at the subunit interface close to the decoding center, probably blocks exit of the E-site tRNA. The chain is Small ribosomal subunit protein uS7 from Streptococcus uberis (strain ATCC BAA-854 / 0140J).